We begin with the raw amino-acid sequence, 230 residues long: MFRGKKYQEAAKLVDKTKLYDPEEAIELALKTSYAKFDETVEVHVRLNVDPRHADQQVRGTVVLPNGTGKSVRVLVFAKGDKAKEAEEAGADYVGAEELVAKIQNEGWTDFDVCIATPDMMGLVGRLGKILGPKGLMPNPKSGTVTMDVAKAVKEAKAGRVEFRLDKTAIIHCPIGKVSFGKEKLLENYRTLIEAIIKARPAAAKGQFIKSITVATTMGPGIKINPLKPL.

Belongs to the universal ribosomal protein uL1 family. In terms of assembly, part of the 50S ribosomal subunit.

In terms of biological role, binds directly to 23S rRNA. The L1 stalk is quite mobile in the ribosome, and is involved in E site tRNA release. Its function is as follows. Protein L1 is also a translational repressor protein, it controls the translation of the L11 operon by binding to its mRNA. The sequence is that of Large ribosomal subunit protein uL1 from Caldicellulosiruptor bescii (strain ATCC BAA-1888 / DSM 6725 / KCTC 15123 / Z-1320) (Anaerocellum thermophilum).